The sequence spans 287 residues: Iodotyrosine deiodinase (287 aa).

The chain crosses the membrane as a helical span at residues 15–34 (HWPSLFITLALIWIVKRLFF). FMN-binding positions include 96–100 (RRSIR), Ser-125, and 125–126 (SG). Residues Ala-127, Glu-154, Tyr-158, and Lys-179 each contribute to the 3,5-diiodo-L-tyrosine site. 3-iodo-L-tyrosine is bound by residues Ala-127, Glu-154, Tyr-158, and Lys-179. FMN is bound by residues 235–237 (VTT) and Arg-277.

It belongs to the nitroreductase family. In terms of assembly, homodimer. Requires FMN as cofactor. As to expression, expressed in spermatocytes.

It localises to the cell membrane. The enzyme catalyses 2 iodide + L-tyrosine + 2 NADP(+) = 3,5-diiodo-L-tyrosine + 2 NADPH + H(+). The catalysed reaction is iodide + L-tyrosine + NADP(+) = 3-iodo-L-tyrosine + NADPH. It carries out the reaction 3-iodo-L-tyrosine + iodide + NADP(+) = 3,5-diiodo-L-tyrosine + NADPH + H(+). It catalyses the reaction L-tyrosine + chloride + NADP(+) = 3-chloro-L-tyrosine + NADPH. The enzyme catalyses bromide + L-tyrosine + NADP(+) = 3-bromo-L-tyrosine + NADPH. Functionally, catalyzes the dehalogenation of halotyrosines such as 3-bromo-L-tyrosine, 3-chloro-L-tyrosine, 3-iodo-L-tyrosine and 3,5-diiodo-L-tyrosine. Activity towards 3-fluoro-L-tyrosine is weak. Important for male and female fertility. May be involved in maintaining the viability of sperm, both during development in the testes and storage in the female spermatheca. This chain is Iodotyrosine deiodinase, found in Drosophila melanogaster (Fruit fly).